Reading from the N-terminus, the 65-residue chain is Large ribosomal subunit protein uL30 (65 aa).

It belongs to the universal ribosomal protein uL30 family. In terms of assembly, part of the 50S ribosomal subunit.

The chain is Large ribosomal subunit protein uL30 from Mycobacterium bovis (strain ATCC BAA-935 / AF2122/97).